The primary structure comprises 635 residues: Threonine--tRNA ligase (635 aa).

The TGS domain occupies 1–58 (MIQVTCDQKNYEVLEGTTAAELAKQLKNSHQFIGVLINERPRDLSTHLNEGDTLVFLT). Residues 237–528 (DHRVLGAKLD…LIENFKGRFP (292 aa)) are catalytic. Zn(2+) is bound by residues Cys328, His379, and His505.

The protein belongs to the class-II aminoacyl-tRNA synthetase family. Homodimer. Zn(2+) serves as cofactor.

Its subcellular location is the cytoplasm. It catalyses the reaction tRNA(Thr) + L-threonine + ATP = L-threonyl-tRNA(Thr) + AMP + diphosphate + H(+). Functionally, catalyzes the attachment of threonine to tRNA(Thr) in a two-step reaction: L-threonine is first activated by ATP to form Thr-AMP and then transferred to the acceptor end of tRNA(Thr). Also edits incorrectly charged L-seryl-tRNA(Thr). The protein is Threonine--tRNA ligase of Chlamydia pneumoniae (Chlamydophila pneumoniae).